The following is a 427-amino-acid chain: Phosphatase PSR1 (427 aa).

S-palmitoyl cysteine attachment occurs at residues cysteine 9 and cysteine 10. Residues 14-34 show a composition bias toward polar residues; sequence TTQSNSNSAYRQQQSSSLNKN. The tract at residues 14-223 is disordered; it reads TTQSNSNSAY…SNDADDEDDE (210 aa). The segment covering 35–48 has biased composition (basic residues); that stretch reads RSVKHSNTKSRTRG. Polar residues predominate over residues 49–80; sequence VHQTNSPPSKTNSAATFSSTERSTGKSGISTN. Residues 104-118 show a composition bias toward basic and acidic residues; the sequence is KVEKRISKDDLYEEK. A Phosphoserine modification is found at serine 110. A compositionally biased stretch (acidic residues) spans 119–130; that stretch reads YEVDEDEEIDDE. Residues 131–151 are compositionally biased toward basic and acidic residues; it reads DNRRSRGIVQEKGDAVKDTSR. Residue lysine 154 forms a Glycyl lysine isopeptide (Lys-Gly) (interchain with G-Cter in ubiquitin) linkage. Positions 155–183 are enriched in low complexity; it reads QQQQQQQQSQPQPQPQSQSQSQSQSQSQQ. The span at 184 to 214 shows a compositional bias: polar residues; sequence RGPTVQVSSDHLIQDMNLSRVSSSSQASETS. Positions 253-411 constitute an FCP1 homology domain; sequence STKGKKCLIL…LDIIPLLEDL (159 aa).

In terms of assembly, interacts with WHI2.

The protein resides in the cell membrane. In terms of biological role, has phosphatase activity in vitro. Involved in the response to sodium and lithium ion stress (but not to potassium or sorbitol stress) by inducing transcription of the sodium pump ENA1/PMR2. Acts through a calcineurin-independent pathway and is functionally redundant with PSR2. Also involved in the general stress response; acts together with WHI2 to activate stress response element (STRE)-mediated gene expression, possibly through dephosphorylation of MSN2. The chain is Phosphatase PSR1 (PSR1) from Saccharomyces cerevisiae (strain ATCC 204508 / S288c) (Baker's yeast).